The sequence spans 493 residues: Galactose-1-phosphate uridylyltransferase 2 (493 aa).

Belongs to the galactose-1-phosphate uridylyltransferase type 2 family.

Its subcellular location is the cytoplasm. The catalysed reaction is alpha-D-galactose 1-phosphate + UDP-alpha-D-glucose = alpha-D-glucose 1-phosphate + UDP-alpha-D-galactose. The protein operates within carbohydrate metabolism; galactose metabolism. This chain is Galactose-1-phosphate uridylyltransferase 2 (galT2), found in Streptococcus pneumoniae serotype 4 (strain ATCC BAA-334 / TIGR4).